The sequence spans 415 residues: TYYTPDYETKDTDILAAFRVTPQPGVPPEGAGAAVAAESSTGTWTTVWTDGLTSLDRYKGRCYQIEPVAGEENQYIAYVAYPLDLFEEGSVTNMFTSIVGNVFGFKALRALRLEDLRIPPAYAKTFQGPPHGIQVERDKLNKYGRPLLGCTIKPKLGLSAKNYGRAVYECLRGGLDFTKDDENVNSQPFMRWRDRFLFVAEALFKAQAETGEIKGHYLNATAGTCEEMMKRAVFARELGVPIIMHDYLTGGFTANTSLAFYCRDNGLLLHIHRAMHAVIDRQKNHGMHFRVLAKALRMSGGDHIHVGTVVGKLEGEREVTLGFVDLLRDDYIEKDRSRGVYFTQDWVSMPGVLPVASGGIHVWHMPALTEIFGDDSVLQFGGGTVGHPWGNAPGAVANRVALEACVQARNEGRDL.

The substrate site is built by Asn-101 and Thr-151. Catalysis depends on Lys-153, which acts as the Proton acceptor. Lys-155 is a binding site for substrate. Mg(2+) is bound by residues Lys-179, Asp-181, and Glu-182. Position 179 is an N6-carboxylysine (Lys-179). His-272 acts as the Proton acceptor in catalysis. Residues Arg-273, His-305, and Ser-357 each coordinate substrate.

It belongs to the RuBisCO large chain family. Type I subfamily. As to quaternary structure, heterohexadecamer of 8 large chains and 8 small chains; disulfide-linked. The disulfide link is formed within the large subunit homodimers. Requires Mg(2+) as cofactor. In terms of processing, the disulfide bond which can form in the large chain dimeric partners within the hexadecamer appears to be associated with oxidative stress and protein turnover.

Its subcellular location is the plastid. It is found in the chloroplast. It carries out the reaction 2 (2R)-3-phosphoglycerate + 2 H(+) = D-ribulose 1,5-bisphosphate + CO2 + H2O. The catalysed reaction is D-ribulose 1,5-bisphosphate + O2 = 2-phosphoglycolate + (2R)-3-phosphoglycerate + 2 H(+). Its function is as follows. RuBisCO catalyzes two reactions: the carboxylation of D-ribulose 1,5-bisphosphate, the primary event in carbon dioxide fixation, as well as the oxidative fragmentation of the pentose substrate in the photorespiration process. Both reactions occur simultaneously and in competition at the same active site. In Cibotium barometz (Scythian lamb), this protein is Ribulose bisphosphate carboxylase large chain.